A 382-amino-acid polypeptide reads, in one-letter code: Mannitol-1-phosphate 5-dehydrogenase (382 aa).

Position 3–14 (3–14 (ALHFGAGNIGRG)) interacts with NAD(+). At K269 the chain carries N6-acetyllysine.

Belongs to the mannitol dehydrogenase family.

It carries out the reaction D-mannitol 1-phosphate + NAD(+) = beta-D-fructose 6-phosphate + NADH + H(+). This chain is Mannitol-1-phosphate 5-dehydrogenase, found in Shigella boydii serotype 18 (strain CDC 3083-94 / BS512).